The primary structure comprises 629 residues: tRNA uridine 5-carboxymethylaminomethyl modification enzyme MnmG (629 aa).

Residue 11–16 (GGGHAG) participates in FAD binding. Position 273-287 (273-287 (GPRYCPSFEDKAVRF)) interacts with NAD(+).

This sequence belongs to the MnmG family. In terms of assembly, homodimer. Heterotetramer of two MnmE and two MnmG subunits. FAD is required as a cofactor.

It localises to the cytoplasm. In terms of biological role, NAD-binding protein involved in the addition of a carboxymethylaminomethyl (cmnm) group at the wobble position (U34) of certain tRNAs, forming tRNA-cmnm(5)s(2)U34. This is tRNA uridine 5-carboxymethylaminomethyl modification enzyme MnmG from Mycoplasma mycoides subsp. mycoides SC (strain CCUG 32753 / NCTC 10114 / PG1).